Reading from the N-terminus, the 264-residue chain is Tryptophan synthase alpha chain (264 aa).

Residues Glu49 and Asp60 each act as proton acceptor in the active site.

The protein belongs to the TrpA family. In terms of assembly, tetramer of two alpha and two beta chains.

The enzyme catalyses (1S,2R)-1-C-(indol-3-yl)glycerol 3-phosphate + L-serine = D-glyceraldehyde 3-phosphate + L-tryptophan + H2O. It functions in the pathway amino-acid biosynthesis; L-tryptophan biosynthesis; L-tryptophan from chorismate: step 5/5. The alpha subunit is responsible for the aldol cleavage of indoleglycerol phosphate to indole and glyceraldehyde 3-phosphate. The protein is Tryptophan synthase alpha chain of Lachnospira eligens (strain ATCC 27750 / DSM 3376 / VPI C15-48 / C15-B4) (Eubacterium eligens).